The sequence spans 186 residues: MRKEIRIAGFGGQGVILAGIVLGKAASLYDGLYAVQTQSYGPEARGGASRAEVVISDEEIDYPKVQSPDILVAMSHQALLTYMDDLKAGGTLIVDPDMVIENEIQDFVEERNISYFRAPATRTAEEKVGITIVANMVMIGALTEATGVVSVRAAEEAIKNSVPPGTEEKNIMAFQAGRELIMEGQK.

As to quaternary structure, heterotetramer of the KorA, KorB, KorC and KorD subunits.

The catalysed reaction is 2 oxidized [2Fe-2S]-[ferredoxin] + 2-oxoglutarate + CoA = succinyl-CoA + 2 reduced [2Fe-2S]-[ferredoxin] + CO2 + H(+). The chain is 2-oxoglutarate synthase subunit KorC (korC) from Methanothermobacter marburgensis (strain ATCC BAA-927 / DSM 2133 / JCM 14651 / NBRC 100331 / OCM 82 / Marburg) (Methanobacterium thermoautotrophicum).